Reading from the N-terminus, the 273-residue chain is 2,3,4,5-tetrahydropyridine-2,6-dicarboxylate N-succinyltransferase (273 aa).

R104 and D141 together coordinate substrate.

This sequence belongs to the transferase hexapeptide repeat family. Homotrimer.

Its subcellular location is the cytoplasm. It carries out the reaction (S)-2,3,4,5-tetrahydrodipicolinate + succinyl-CoA + H2O = (S)-2-succinylamino-6-oxoheptanedioate + CoA. It functions in the pathway amino-acid biosynthesis; L-lysine biosynthesis via DAP pathway; LL-2,6-diaminopimelate from (S)-tetrahydrodipicolinate (succinylase route): step 1/3. The protein is 2,3,4,5-tetrahydropyridine-2,6-dicarboxylate N-succinyltransferase of Nitrosomonas eutropha (strain DSM 101675 / C91 / Nm57).